The sequence spans 444 residues: MSASTMTPGEIVSELDKYIIGQNRAKRAVAVALRNRWRRQQVADPLRHEIHPKNILMIGPTGVGKTEIARRLAKLANAPFIKIEATKFTEVGYVGRDVDTIIRDLTEFSIKQTRELEMRRVRSHAEDAAEDRILDVLVPPARNAMGEPQRDDGNTTRQTFRKRLREGSLDDLEIEIDIAQATPQLDVMTPPGMEEMAEQLRGMFAGLARDKTKPKKIKVKEAFKLIIEEEAAKRVNEDDLRAAAIANVEQNGIVFLDEIDKIAARQESGGADVSRQGVQRDLLPLVEGTTVNTRYGMVRTDHILFIASGAFHLSRPSDLIPELQGRFPIRVELDSLSADDFVRILSETDASLVKQYTALLATEDVQLAFTEDGIKRLAELAFSVNERTENIGARRLYTVMEKLLEELSFDAGASSGQSVTIDAAYVDAQLSEAASSQDLARYVL.

ATP contacts are provided by residues isoleucine 20, glycine 62–glutamate 67, aspartate 257, glutamate 322, and arginine 394.

Belongs to the ClpX chaperone family. HslU subfamily. As to quaternary structure, a double ring-shaped homohexamer of HslV is capped on each side by a ring-shaped HslU homohexamer. The assembly of the HslU/HslV complex is dependent on binding of ATP.

It localises to the cytoplasm. Its function is as follows. ATPase subunit of a proteasome-like degradation complex; this subunit has chaperone activity. The binding of ATP and its subsequent hydrolysis by HslU are essential for unfolding of protein substrates subsequently hydrolyzed by HslV. HslU recognizes the N-terminal part of its protein substrates and unfolds these before they are guided to HslV for hydrolysis. The chain is ATP-dependent protease ATPase subunit HslU from Bordetella avium (strain 197N).